A 541-amino-acid polypeptide reads, in one-letter code: MITTKEIIIASLNEALEKLEIKKPITLTEPKSYGDYSTNLALTLQKELGKPAIEIAKEIVNAIDLKKHKEIVKVEVANPGFINFWVSNSVLSDLVNSINSLEDHYGDMSKEGKGAVNIEFVSANPTGFLHIGHARNAAIGATLCNVLEKAGHRVVREYYVNDYGNQMNNLAASVFSRYQQIFNKDFPMPDDAYKGHDMTIFADAFFKKYGDKYRNVAYTEEVKKLFRDFGREIALENIKIDLGRFGVWFDLYTSETQQYEKDRVWPVIRRLKSTYEKDGATWLNTTKGGNDDKDRVIIKGNGESTYMCADIAYHEQKFVELHDPEKGKIIDIWGADHSGYVERIKFSFEDLGWRRDQIEILLFQLLRVVKNGKEIKMSKRLGTSLTLRELLDLVGKDAVRYFLIERSYNSKIDFDINKVQKSDETNPLFLIKYAHARCYQLLEKAQIKNPIASNLENDFAQKLTNELKEYPNLIDTMAKTYKVNLLPPYLLKLAGAFNSFYSNVRISGDPNEQSYLALVKATKIVLANAMKLMDLDIPNKM.

A 'HIGH' region motif is present at residues 123–133 (ANPTGFLHIGH).

Belongs to the class-I aminoacyl-tRNA synthetase family. As to quaternary structure, monomer.

It localises to the cytoplasm. The enzyme catalyses tRNA(Arg) + L-arginine + ATP = L-arginyl-tRNA(Arg) + AMP + diphosphate. This chain is Arginine--tRNA ligase, found in Metamycoplasma arthritidis (strain 158L3-1) (Mycoplasma arthritidis).